The sequence spans 261 residues: Metallo-beta-lactamase fold-containing protein ST1585 (261 aa).

Zn(2+)-binding residues include histidine 58, histidine 60, aspartate 62, histidine 63, histidine 148, aspartate 165, and histidine 207.

Belongs to the metallo-beta-lactamase superfamily. As to quaternary structure, monomer.

The sequence is that of Metallo-beta-lactamase fold-containing protein ST1585 from Sulfurisphaera tokodaii (strain DSM 16993 / JCM 10545 / NBRC 100140 / 7) (Sulfolobus tokodaii).